The primary structure comprises 523 residues: UDP-N-acetylmuramyl-tripeptide synthetase (523 aa).

Serine 38 is a UDP-N-acetyl-alpha-D-muramoyl-L-alanyl-D-glutamate binding site. 116-122 (GTKGKTT) provides a ligand contact to ATP. UDP-N-acetyl-alpha-D-muramoyl-L-alanyl-D-glutamate-binding positions include 162–163 (TT), serine 189, and arginine 197. Position 231 is an N6-carboxylysine (lysine 231).

Belongs to the MurCDEF family. MurE subfamily. Carboxylation is probably crucial for Mg(2+) binding and, consequently, for the gamma-phosphate positioning of ATP.

It is found in the cytoplasm. It participates in cell wall biogenesis; peptidoglycan biosynthesis. Catalyzes the addition of an amino acid to the nucleotide precursor UDP-N-acetylmuramoyl-L-alanyl-D-glutamate (UMAG) in the biosynthesis of bacterial cell-wall peptidoglycan. In Lactobacillus acidophilus (strain ATCC 700396 / NCK56 / N2 / NCFM), this protein is UDP-N-acetylmuramyl-tripeptide synthetase.